The following is a 220-amino-acid chain: Phosphatidylserine decarboxylase proenzyme (220 aa).

The Schiff-base intermediate with substrate; via pyruvic acid role is filled by serine 189. Pyruvic acid (Ser); by autocatalysis is present on serine 189.

It belongs to the phosphatidylserine decarboxylase family. PSD-A subfamily. As to quaternary structure, heterodimer of a large membrane-associated beta subunit and a small pyruvoyl-containing alpha subunit. Requires pyruvate as cofactor. In terms of processing, is synthesized initially as an inactive proenzyme. Formation of the active enzyme involves a self-maturation process in which the active site pyruvoyl group is generated from an internal serine residue via an autocatalytic post-translational modification. Two non-identical subunits are generated from the proenzyme in this reaction, and the pyruvate is formed at the N-terminus of the alpha chain, which is derived from the carboxyl end of the proenzyme. The post-translation cleavage follows an unusual pathway, termed non-hydrolytic serinolysis, in which the side chain hydroxyl group of the serine supplies its oxygen atom to form the C-terminus of the beta chain, while the remainder of the serine residue undergoes an oxidative deamination to produce ammonia and the pyruvoyl prosthetic group on the alpha chain.

The protein resides in the cell membrane. It catalyses the reaction a 1,2-diacyl-sn-glycero-3-phospho-L-serine + H(+) = a 1,2-diacyl-sn-glycero-3-phosphoethanolamine + CO2. It functions in the pathway phospholipid metabolism; phosphatidylethanolamine biosynthesis; phosphatidylethanolamine from CDP-diacylglycerol: step 2/2. In terms of biological role, catalyzes the formation of phosphatidylethanolamine (PtdEtn) from phosphatidylserine (PtdSer). The protein is Phosphatidylserine decarboxylase proenzyme of Pelobacter propionicus (strain DSM 2379 / NBRC 103807 / OttBd1).